The sequence spans 882 residues: MIHVLKSRSTLLTASSIVRTSVGSSSRYSQTRTYSRTHSWSKDASGGAISVLPTKLPFGEQAPRFPHTLGLPLVSRPLFPGLVTSVTLTDEATIDAMEALTKNQDQAYVSCFLRKKNPTGVSEGGVILATPEVITDPSDIYHVGTFAQIQRLTRGDETAATLILLAHRRLDLEYVDKIGPPIDVTVKHWNRSDYTGADDTIRALSNEIISTIREVAQVNMLFRENLQYFPMRVDANDPFRLADFAASISASGTPEDLQAVLEEKDAEMRLHKALVLLNREREVSKLQQEISQKVEERMTEAQRKYFLTEQLKSIKKELGMERDDKDTLIEKYRKTLSEYPHVPEEAMETIDAELEKFSTLEKNSPEYNVTRSYLDWLTSVPWGVETEENFDIQKARKTLDRDHYGLDDVKDTILEFIAIGKLRGSVQGKILCLSGPPGTGKTSIAKSVADALGRQFFRFSVGGLSDVSEIKGHRRTYIGAMPGKLIQCLKATGTTNPVVLIDEIDKLGTGFRGDPASALLEVLDPGQNSTFRDYFLDVPVDISKVLFICTANELERIPGPLLDRMEVIRLSGYDLPEKVAIAEQYLVPKSMRDSGLLGVPETLKLTIDAVRSLARWYAREAGVRNLAKYIDRITRKLALQVVAESEGATLTDKSSRKSNTWEITEDNLHEYVGKPVFTSDRLYEDGPLPHGIVMGLAYTSMGGSALYIETQSIRRGLDSEGKTRGGGTLKVTGQLGDVMKESTQIASTVARARLSDIKPESNFFDINDIHMHVPEGATPKDGPSAGVTMVTSMLSLALDRPIRNDLAMTGEVSLTGKVLAVGGIKEKIMGARRAGIKCVILPAANKRDYDEIPDYLKEDLEVHYADTFDKVYEVAFSSVDST.

A mitochondrion-targeting transit peptide spans 1–34 (MIHVLKSRSTLLTASSIVRTSVGSSSRYSQTRTY). The Lon N-terminal domain maps to 68-281 (TLGLPLVSRP…KALVLLNRER (214 aa)). 435–442 (GPPGTGKT) lines the ATP pocket. The 192-residue stretch at 687–878 (PLPHGIVMGL…DKVYEVAFSS (192 aa)) folds into the Lon proteolytic domain. Residues Ser784 and Lys827 contribute to the active site.

It belongs to the peptidase S16 family. As to quaternary structure, homohexamer or homoheptamer. Organized in a ring with a central cavity.

It is found in the mitochondrion matrix. The catalysed reaction is Hydrolysis of proteins in presence of ATP.. ATP-dependent serine protease that mediates the selective degradation of misfolded, unassembled or oxidatively damaged polypeptides as well as certain short-lived regulatory proteins in the mitochondrial matrix. May also have a chaperone function in the assembly of inner membrane protein complexes. Participates in the regulation of mitochondrial gene expression and in the maintenance of the integrity of the mitochondrial genome. Binds to mitochondrial DNA in a site-specific manner. In Phaeodactylum tricornutum (strain CCAP 1055/1), this protein is Lon protease homolog, mitochondrial.